Consider the following 236-residue polypeptide: Syntaxin-8 (236 aa).

Topologically, residues 1–215 (MAPDPWFSTY…LVDRKSTSCG (215 aa)) are cytoplasmic. Residues 42–65 (LTIRTLLKNLKVKIDLLKDLLLRA) are a coiled coil. One can recognise a t-SNARE coiled-coil homology domain in the interval 145–207 (QKIIQEQDAG…RTEARRVTLV (63 aa)). Ser160 carries the phosphoserine modification. Residues 216 to 232 (MIMVILLLLVAIVVVAV) traverse the membrane as a helical; Anchor for type IV membrane protein segment. At 233-236 (WPTN) the chain is on the vesicular side.

The protein belongs to the syntaxin family. In terms of assembly, forms a SNARE complex with STX7, VTI1B and VAMP8 which functions in the homotypic fusion of late endosomes. Part of the SNARE core complex containing STX7, VAMP8 and VTI1B. Interacts with VAMP8. Interacts with HECTD3. Interacts with TPC1. Post-translationally, ubiquitinated by HECTD3.

Its subcellular location is the membrane. Vesicle trafficking protein that functions in the early secretory pathway, possibly by mediating retrograde transport from cis-Golgi membranes to the ER. This chain is Syntaxin-8 (Stx8), found in Mus musculus (Mouse).